A 236-amino-acid chain; its full sequence is Biosynthetic peptidoglycan transglycosylase (236 aa).

A helical transmembrane segment spans residues 17–37; it reads IVILVALALLALPYLLTILYG.

Belongs to the glycosyltransferase 51 family.

It is found in the cell inner membrane. The catalysed reaction is [GlcNAc-(1-&gt;4)-Mur2Ac(oyl-L-Ala-gamma-D-Glu-L-Lys-D-Ala-D-Ala)](n)-di-trans,octa-cis-undecaprenyl diphosphate + beta-D-GlcNAc-(1-&gt;4)-Mur2Ac(oyl-L-Ala-gamma-D-Glu-L-Lys-D-Ala-D-Ala)-di-trans,octa-cis-undecaprenyl diphosphate = [GlcNAc-(1-&gt;4)-Mur2Ac(oyl-L-Ala-gamma-D-Glu-L-Lys-D-Ala-D-Ala)](n+1)-di-trans,octa-cis-undecaprenyl diphosphate + di-trans,octa-cis-undecaprenyl diphosphate + H(+). It participates in cell wall biogenesis; peptidoglycan biosynthesis. In terms of biological role, peptidoglycan polymerase that catalyzes glycan chain elongation from lipid-linked precursors. The chain is Biosynthetic peptidoglycan transglycosylase from Rhodopseudomonas palustris (strain ATCC BAA-98 / CGA009).